A 397-amino-acid chain; its full sequence is Acetate kinase (397 aa).

A Mg(2+)-binding site is contributed by N8. K15 lines the ATP pocket. R89 is a binding site for substrate. Catalysis depends on D146, which acts as the Proton donor/acceptor. ATP-binding positions include 206–210 (HLGNG), 281–283 (DLR), and 329–333 (GVGEN). Position 382 (E382) interacts with Mg(2+).

It belongs to the acetokinase family. Homodimer. Mg(2+) is required as a cofactor. It depends on Mn(2+) as a cofactor.

The protein resides in the cytoplasm. The catalysed reaction is acetate + ATP = acetyl phosphate + ADP. Its pathway is metabolic intermediate biosynthesis; acetyl-CoA biosynthesis; acetyl-CoA from acetate: step 1/2. Functionally, catalyzes the formation of acetyl phosphate from acetate and ATP. Can also catalyze the reverse reaction. This Bacillus mycoides (strain KBAB4) (Bacillus weihenstephanensis) protein is Acetate kinase.